The following is a 328-amino-acid chain: Beta-ketoacyl-[acyl-carrier-protein] synthase III (328 aa).

Residues Cys122 and His255 contribute to the active site. An ACP-binding region spans residues 256–260 (QANVR). Asn285 is a catalytic residue.

Belongs to the thiolase-like superfamily. FabH family. As to quaternary structure, homodimer.

It localises to the cytoplasm. The catalysed reaction is malonyl-[ACP] + acetyl-CoA + H(+) = 3-oxobutanoyl-[ACP] + CO2 + CoA. It participates in lipid metabolism; fatty acid biosynthesis. In terms of biological role, catalyzes the condensation reaction of fatty acid synthesis by the addition to an acyl acceptor of two carbons from malonyl-ACP. Catalyzes the first condensation reaction which initiates fatty acid synthesis and may therefore play a role in governing the total rate of fatty acid production. Possesses both acetoacetyl-ACP synthase and acetyl transacylase activities. Its substrate specificity determines the biosynthesis of branched-chain and/or straight-chain of fatty acids. The sequence is that of Beta-ketoacyl-[acyl-carrier-protein] synthase III from Bordetella pertussis (strain Tohama I / ATCC BAA-589 / NCTC 13251).